The chain runs to 607 residues: Elongation factor 4 (607 aa).

The tr-type G domain maps to 11-193 (SKIRNFSIIA…QIVEKVPAPT (183 aa)). GTP is bound by residues 23-28 (DHGKST) and 140-143 (NKID).

It belongs to the TRAFAC class translation factor GTPase superfamily. Classic translation factor GTPase family. LepA subfamily.

The protein resides in the cell membrane. It carries out the reaction GTP + H2O = GDP + phosphate + H(+). Required for accurate and efficient protein synthesis under certain stress conditions. May act as a fidelity factor of the translation reaction, by catalyzing a one-codon backward translocation of tRNAs on improperly translocated ribosomes. Back-translocation proceeds from a post-translocation (POST) complex to a pre-translocation (PRE) complex, thus giving elongation factor G a second chance to translocate the tRNAs correctly. Binds to ribosomes in a GTP-dependent manner. This Bacillus cereus (strain ZK / E33L) protein is Elongation factor 4.